The following is a 551-amino-acid chain: Arginine--tRNA ligase (551 aa).

The short motif at 123 to 133 is the 'HIGH' region element; that stretch reads ANPTGPLTIGR.

This sequence belongs to the class-I aminoacyl-tRNA synthetase family. Monomer.

Its subcellular location is the cytoplasm. It carries out the reaction tRNA(Arg) + L-arginine + ATP = L-arginyl-tRNA(Arg) + AMP + diphosphate. This chain is Arginine--tRNA ligase, found in Chlorobaculum tepidum (strain ATCC 49652 / DSM 12025 / NBRC 103806 / TLS) (Chlorobium tepidum).